The primary structure comprises 86 residues: Small ribosomal subunit protein bS20 (86 aa).

Residues 1–25 (MANSASSRKRARQAVKRNKHNSQIR) are disordered. Over residues 7–25 (SRKRARQAVKRNKHNSQIR) the composition is skewed to basic residues.

The protein belongs to the bacterial ribosomal protein bS20 family.

Functionally, binds directly to 16S ribosomal RNA. The sequence is that of Small ribosomal subunit protein bS20 from Vesicomyosocius okutanii subsp. Calyptogena okutanii (strain HA).